The chain runs to 397 residues: Elongation factor Tu (397 aa).

The 197-residue stretch at 10–206 (KPHVNIGTIG…EVDAYIPTPE (197 aa)) folds into the tr-type G domain. A G1 region spans residues 19-26 (GHVDHGKT). 19-26 (GHVDHGKT) contacts GTP. Residue Thr26 coordinates Mg(2+). The G2 stretch occupies residues 60 to 64 (GITIN). The G3 stretch occupies residues 81–84 (DCPG). GTP contacts are provided by residues 81–85 (DCPGH) and 136–139 (NKAD). The interval 136 to 139 (NKAD) is G4. Residues 174-176 (SAL) form a G5 region.

The protein belongs to the TRAFAC class translation factor GTPase superfamily. Classic translation factor GTPase family. EF-Tu/EF-1A subfamily. In terms of assembly, monomer.

It is found in the cytoplasm. It carries out the reaction GTP + H2O = GDP + phosphate + H(+). GTP hydrolase that promotes the GTP-dependent binding of aminoacyl-tRNA to the A-site of ribosomes during protein biosynthesis. In Clostridium acetobutylicum (strain ATCC 824 / DSM 792 / JCM 1419 / IAM 19013 / LMG 5710 / NBRC 13948 / NRRL B-527 / VKM B-1787 / 2291 / W), this protein is Elongation factor Tu.